A 580-amino-acid chain; its full sequence is Type 3 secretion system translocon protein SctE (580 aa).

Helical transmembrane passes span 313–333 (ILGA…GGAS) and 399–419 (IGSI…VVLV).

It belongs to the SctE/SipB/YopB family. In terms of assembly, the core secretion machinery of the T3SS is composed of approximately 20 different proteins, including cytoplasmic components, a base, an export apparatus and a needle. This subunit is involved in the formation of a pore, called the translocon, in host membrane.

It localises to the secreted. It is found in the host membrane. Functionally, component of the type III secretion system (T3SS), also called injectisome, which is used to inject bacterial effector proteins into eukaryotic host cells. IpaB/SctE and IpaC/SctB are inserted into the host membrane where they form a pore and allow the translocation of effector proteins into the cytosol of target cells. In Shigella dysenteriae, this protein is Type 3 secretion system translocon protein SctE.